The chain runs to 442 residues: Chromosomal replication initiator protein DnaA (442 aa).

Residues 1-75 (MDAWPRCLER…GNGEVALAVG (75 aa)) form a domain I, interacts with DnaA modulators region. Residues 75–104 (GSRPRAPEPLPAPQAVASAPAAAPIVPFAG) form a domain II region. A domain III, AAA+ region region spans residues 105–322 (NLDSHYTFAN…GALNTLVARA (218 aa)). ATP-binding residues include Gly150, Gly152, Lys153, and Thr154. The domain IV, binds dsDNA stretch occupies residues 323–442 (NFTGRSITVE…WEKLIRKLSE (120 aa)).

Belongs to the DnaA family. As to quaternary structure, oligomerizes as a right-handed, spiral filament on DNA at oriC.

It is found in the cytoplasm. In terms of biological role, plays an essential role in the initiation and regulation of chromosomal replication. ATP-DnaA binds to the origin of replication (oriC) to initiate formation of the DNA replication initiation complex once per cell cycle. Binds the DnaA box (a 9 base pair repeat at the origin) and separates the double-stranded (ds)DNA. Forms a right-handed helical filament on oriC DNA; dsDNA binds to the exterior of the filament while single-stranded (ss)DNA is stabiized in the filament's interior. The ATP-DnaA-oriC complex binds and stabilizes one strand of the AT-rich DNA unwinding element (DUE), permitting loading of DNA polymerase. After initiation quickly degrades to an ADP-DnaA complex that is not apt for DNA replication. Binds acidic phospholipids. This is Chromosomal replication initiator protein DnaA from Xanthomonas campestris pv. campestris (strain 8004).